Reading from the N-terminus, the 216-residue chain is Somatotropin (216 aa).

The first 26 residues, methionine 1–alanine 26, serve as a signal peptide directing secretion. Histidine 45 contacts Zn(2+). A disulfide bridge connects residues cysteine 78 and cysteine 189. Serine 131 bears the Phosphoserine mark. Glutamate 198 contacts Zn(2+). Cysteines 206 and 214 form a disulfide.

This sequence belongs to the somatotropin/prolactin family.

The protein resides in the secreted. Plays an important role in growth control. Its major role in stimulating body growth is to stimulate the liver and other tissues to secrete IGF1. It stimulates both the differentiation and proliferation of myoblasts. It also stimulates amino acid uptake and protein synthesis in muscle and other tissues. This chain is Somatotropin (GH1), found in Balaenoptera physalus (Fin whale).